Reading from the N-terminus, the 218-residue chain is Probable GTP-binding protein EngB (218 aa).

In terms of domain architecture, EngB-type G spans 31-205 (SGIEIAFAGR…EQKVTSWYAQ (175 aa)). GTP-binding positions include 39-46 (GRSNAGKS), 66-70 (GRTQL), 84-87 (DLPG), 151-154 (TKAD), and 184-186 (FSS). Residues Ser46 and Thr68 each contribute to the Mg(2+) site.

The protein belongs to the TRAFAC class TrmE-Era-EngA-EngB-Septin-like GTPase superfamily. EngB GTPase family. The cofactor is Mg(2+).

Functionally, necessary for normal cell division and for the maintenance of normal septation. This is Probable GTP-binding protein EngB from Psychromonas ingrahamii (strain DSM 17664 / CCUG 51855 / 37).